The primary structure comprises 491 residues: Fibrinogen beta chain (491 aa).

Residues 1 to 30 (MKRMVSWSFHKLKTMKHLLLLLLCVFLVKS) form the signal peptide. A Pyrrolidone carboxylic acid modification is found at glutamine 31. The segment at 44 to 75 (RGHRPLDKKREEAPSLRPAPPPISGGGYRARP) is disordered. The interval 45–47 (GHR) is beta-chain polymerization, binding distal domain of another fibrin. The span at 47–57 (RPLDKKREEAP) shows a compositional bias: basic and acidic residues. Residues 157–222 (KRQKQVKDNE…ESDVSAQMEY (66 aa)) are a coiled coil. Cystine bridges form between cysteine 231–cysteine 316 and cysteine 241–cysteine 270. The 257-residue stretch at 232–488 (NIPVVSGKEC…KMSMKIRPFF (257 aa)) folds into the Fibrinogen C-terminal domain. Residue asparagine 394 is glycosylated (N-linked (GlcNAc...) asparagine). Cysteine 424 and cysteine 437 are disulfide-bonded.

As to quaternary structure, heterohexamer; disulfide linked. Contains 2 sets of 3 non-identical chains (alpha, beta and gamma). The 2 heterotrimers are in head to head conformation with the N-termini in a small central domain. Conversion of fibrinogen to fibrin is triggered by thrombin, which cleaves fibrinopeptides A and B from alpha and beta chains, and thus exposes the N-terminal polymerization sites responsible for the formation of the soft clot. The soft clot is converted into the hard clot by factor XIIIA which catalyzes the epsilon-(gamma-glutamyl)lysine cross-linking between gamma chains (stronger) and between alpha chains (weaker) of different monomers. Detected in blood plasma (at protein level).

It is found in the secreted. Cleaved by the protease thrombin to yield monomers which, together with fibrinogen alpha (FGA) and fibrinogen gamma (FGG), polymerize to form an insoluble fibrin matrix. Fibrin has a major function in hemostasis as one of the primary components of blood clots. In addition, functions during the early stages of wound repair to stabilize the lesion and guide cell migration during re-epithelialization. Was originally thought to be essential for platelet aggregation, based on in vitro studies using anticoagulated blood. However subsequent studies have shown that it is not absolutely required for thrombus formation in vivo. Enhances expression of SELP in activated platelets. Maternal fibrinogen is essential for successful pregnancy. Fibrin deposition is also associated with infection, where it protects against IFNG-mediated hemorrhage. May also facilitate the antibacterial immune response via both innate and T-cell mediated pathways. The protein is Fibrinogen beta chain (FGB) of Homo sapiens (Human).